The primary structure comprises 397 residues: Lysophospholipid transporter LplT (397 aa).

Helical transmembrane passes span 16 to 36 (MMAVIVAQFLSAFGDNALLFA), 53 to 73 (VLQMVFVCAYILLAPFVGQVA), 91 to 111 (LGAVVIVFGGNPFVGYTLVGV), 139 to 159 (LMESSTIAAILIGSMAGGMLA), 164 to 184 (GAALGVCALAYAGAVGANLLI), 229 to 249 (WGAGVTLRFLLVLWVPVALGI), 257 to 277 (YLNAMVAVGIVAGAGAAAKLV), 282 to 302 (VSRCMPAGILIGIAVIFFSLQ), 304 to 324 (AALPAYLLLLLIGFFGGFFVV), 344 to 364 (IAVQNLGENTAMLLMLGLYSL), and 372 to 392 (VVGIGVGFGAIFALAIAGLWL).

It belongs to the major facilitator superfamily. LplT (TC 2.A.1.42) family.

Its subcellular location is the cell inner membrane. Its function is as follows. Catalyzes the facilitated diffusion of 2-acyl-glycero-3-phosphoethanolamine (2-acyl-GPE) into the cell. In Cronobacter sakazakii (strain ATCC BAA-894) (Enterobacter sakazakii), this protein is Lysophospholipid transporter LplT.